The following is a 200-amino-acid chain: Small ribosomal subunit protein uS2 (200 aa).

This sequence belongs to the universal ribosomal protein uS2 family.

The polypeptide is Small ribosomal subunit protein uS2 (Picrophilus torridus (strain ATCC 700027 / DSM 9790 / JCM 10055 / NBRC 100828 / KAW 2/3)).